A 182-amino-acid polypeptide reads, in one-letter code: Small ribosomal subunit protein uS9 (182 aa).

Belongs to the universal ribosomal protein uS9 family.

The chain is Small ribosomal subunit protein uS9 from Corynebacterium efficiens (strain DSM 44549 / YS-314 / AJ 12310 / JCM 11189 / NBRC 100395).